We begin with the raw amino-acid sequence, 237 residues long: Uridylate kinase (237 aa).

13–16 (KLSG) is an ATP binding site. Gly-53 is a binding site for UMP. Residues Gly-54 and Arg-58 each coordinate ATP. UMP-binding positions include Asp-73 and 134–141 (AGLPYFST). Positions 162, 168, and 171 each coordinate ATP.

The protein belongs to the UMP kinase family. Homohexamer.

It is found in the cytoplasm. The enzyme catalyses UMP + ATP = UDP + ADP. The protein operates within pyrimidine metabolism; CTP biosynthesis via de novo pathway; UDP from UMP (UMPK route): step 1/1. Inhibited by UTP. Catalyzes the reversible phosphorylation of UMP to UDP. The protein is Uridylate kinase of Leifsonia xyli subsp. xyli (strain CTCB07).